The following is a 471-amino-acid chain: Adenosylhomocysteinase (471 aa).

Residues Thr-60, Asp-135, and Glu-196 each coordinate substrate. 197–199 (TTT) lines the NAD(+) pocket. Substrate is bound by residues Lys-226 and Asp-230. Residues Asn-231, 260 to 265 (GYGDVG), Glu-283, Asn-318, 339 to 341 (IGH), and Asn-387 each bind NAD(+).

The protein belongs to the adenosylhomocysteinase family. NAD(+) is required as a cofactor.

The protein resides in the cytoplasm. The catalysed reaction is S-adenosyl-L-homocysteine + H2O = L-homocysteine + adenosine. Its pathway is amino-acid biosynthesis; L-homocysteine biosynthesis; L-homocysteine from S-adenosyl-L-homocysteine: step 1/1. Its function is as follows. May play a key role in the regulation of the intracellular concentration of adenosylhomocysteine. The chain is Adenosylhomocysteinase from Chlorobium luteolum (strain DSM 273 / BCRC 81028 / 2530) (Pelodictyon luteolum).